The chain runs to 159 residues: 3-dehydroquinate dehydratase (159 aa).

Y31 (proton acceptor) is an active-site residue. N82, H88, and D95 together coordinate substrate. The active-site Proton donor is H109. Residues 110-111 (IS) and R120 each bind substrate.

The protein belongs to the type-II 3-dehydroquinase family. Homododecamer.

The enzyme catalyses 3-dehydroquinate = 3-dehydroshikimate + H2O. The protein operates within metabolic intermediate biosynthesis; chorismate biosynthesis; chorismate from D-erythrose 4-phosphate and phosphoenolpyruvate: step 3/7. Catalyzes a trans-dehydration via an enolate intermediate. The polypeptide is 3-dehydroquinate dehydratase (Streptomyces avermitilis (strain ATCC 31267 / DSM 46492 / JCM 5070 / NBRC 14893 / NCIMB 12804 / NRRL 8165 / MA-4680)).